The following is a 428-amino-acid chain: Probable RNase MJ4 (428 aa).

The Zn(2+) site is built by His-57, His-59, Asp-61, His-62, His-143, Asp-165, and His-397.

It belongs to the metallo-beta-lactamase superfamily. RNA-metabolizing metallo-beta-lactamase-like family. Requires Zn(2+) as cofactor.

In terms of biological role, probably an RNase. The protein is Probable RNase MJ4 of Methanocaldococcus jannaschii (strain ATCC 43067 / DSM 2661 / JAL-1 / JCM 10045 / NBRC 100440) (Methanococcus jannaschii).